A 515-amino-acid polypeptide reads, in one-letter code: MTKRALISVSDKAGIVDFAQELKKLGWDIISTGGTKTALDTAGIKTIAIDDITGFPEMMDGRVKTLHPNIHGGLLARRDLDTHLKAAQENGIELIDLVVVNLYPFKETILRPDVTYAQAVENIDIGGPSMLRSAAKNHASVTVVVDPSDYERVLAELTEIGETTYETRQALAAKVFRHTAAYDALIAEYFTAQVGETKPEKLTLTYDLKQEMRYGENPQQAADFYQKALPTDYSIASAKQLNGKELSFNNIRDADAAIRIIRDFKERPTVVALKHMNPCGIGQADTIEKAWDYAYEADSVSIFGGIVVLNREVDKATAEKMHPIFLEIIIAPSYSDEALAILTNKKKNLRILQLPFEGQAASEIEAEYTGVVGGMLVQNQDVIEEKADAWEVVTERQPSDDEKEALEFAWRAIKYVKSNGILIANNHMTLGVGPGQTNRVASVRIAIEQAKDRLEGAALASDAFFPFADNIEEIAAAGIKAIIQPGGSVRDQESIDAANKHGIAMIFTGVRHFRH.

An MGS-like domain is found at 1–145 (MTKRALISVS…KNHASVTVVV (145 aa)).

It belongs to the PurH family.

The catalysed reaction is (6R)-10-formyltetrahydrofolate + 5-amino-1-(5-phospho-beta-D-ribosyl)imidazole-4-carboxamide = 5-formamido-1-(5-phospho-D-ribosyl)imidazole-4-carboxamide + (6S)-5,6,7,8-tetrahydrofolate. It carries out the reaction IMP + H2O = 5-formamido-1-(5-phospho-D-ribosyl)imidazole-4-carboxamide. It functions in the pathway purine metabolism; IMP biosynthesis via de novo pathway; 5-formamido-1-(5-phospho-D-ribosyl)imidazole-4-carboxamide from 5-amino-1-(5-phospho-D-ribosyl)imidazole-4-carboxamide (10-formyl THF route): step 1/1. It participates in purine metabolism; IMP biosynthesis via de novo pathway; IMP from 5-formamido-1-(5-phospho-D-ribosyl)imidazole-4-carboxamide: step 1/1. The protein is Bifunctional purine biosynthesis protein PurH of Streptococcus uberis (strain ATCC BAA-854 / 0140J).